The chain runs to 102 residues: MVAKGSDFETEIKEEIIVAEPRRFKVILLNDDYSTMDFVVEVLMVIFNKNFDEALGVMLKVHNEGRGVCGIYPYDVAETKVSQVKKKAEESGFPLRAILEEC.

The protein belongs to the ClpS family. As to quaternary structure, binds to the N-terminal domain of the chaperone ClpA.

In terms of biological role, involved in the modulation of the specificity of the ClpAP-mediated ATP-dependent protein degradation. The sequence is that of ATP-dependent Clp protease adapter protein ClpS from Wolinella succinogenes (strain ATCC 29543 / DSM 1740 / CCUG 13145 / JCM 31913 / LMG 7466 / NCTC 11488 / FDC 602W) (Vibrio succinogenes).